Reading from the N-terminus, the 651-residue chain is Probable potassium transport system protein Kup (651 aa).

Transmembrane regions (helical) follow at residues 41-61 (LVLGALGVVYGDIGTSPIYAF), 82-102 (VVSLIFWALTLVVTVKYVLFV), 130-150 (LILGVGICGAALFFGDAVITP), 163-183 (IVAPNLTPFVVPATVVILVTL), 194-214 (VAIVFGPIMALWFVALGASGL), 235-255 (FLTVSPAVAFVTVGAVFLAMT), 276-296 (WLWIVFPCLLLNYFGQAAFIL), 309-329 (MIPSFALWPMVLLATAATVIA), 366-386 (IYIPRVNLLLGLAVVILVLGF), 395-415 (AYGIAVTGNMLVTTVLLYIVM), 426-446 (ALPIILGFLVIDMLFFSANII), and 450-470 (EGGWASIGIATVLVLIMWTWV).

Belongs to the HAK/KUP transporter (TC 2.A.72) family.

The protein resides in the cell inner membrane. It carries out the reaction K(+)(in) + H(+)(in) = K(+)(out) + H(+)(out). Its function is as follows. Transport of potassium into the cell. Likely operates as a K(+):H(+) symporter. The sequence is that of Probable potassium transport system protein Kup from Brucella melitensis biotype 2 (strain ATCC 23457).